A 107-amino-acid chain; its full sequence is Phosphoribosyl-ATP pyrophosphatase (107 aa).

This sequence belongs to the PRA-PH family.

The protein localises to the cytoplasm. The enzyme catalyses 1-(5-phospho-beta-D-ribosyl)-ATP + H2O = 1-(5-phospho-beta-D-ribosyl)-5'-AMP + diphosphate + H(+). It functions in the pathway amino-acid biosynthesis; L-histidine biosynthesis; L-histidine from 5-phospho-alpha-D-ribose 1-diphosphate: step 2/9. This Bacillus cytotoxicus (strain DSM 22905 / CIP 110041 / 391-98 / NVH 391-98) protein is Phosphoribosyl-ATP pyrophosphatase.